A 111-amino-acid polypeptide reads, in one-letter code: Cytochrome c (111 aa).

A1 carries the N-acetylalanine modification. C22, C25, and H26 together coordinate heme c. K80 carries the N6,N6,N6-trimethyllysine modification. M88 contacts heme c. K94 carries the N6,N6,N6-trimethyllysine modification.

It belongs to the cytochrome c family. Binds 1 heme c group covalently per subunit.

It localises to the mitochondrion intermembrane space. In terms of biological role, electron carrier protein. The oxidized form of the cytochrome c heme group can accept an electron from the heme group of the cytochrome c1 subunit of cytochrome reductase. Cytochrome c then transfers this electron to the cytochrome oxidase complex, the final protein carrier in the mitochondrial electron-transport chain. The polypeptide is Cytochrome c (Nigella damascena (Love-in-a-mist)).